Here is a 379-residue protein sequence, read N- to C-terminus: Anomalous homeobox protein (379 aa).

The segment at residues 135 to 196 (PEGLKSRNFP…NYRRRQRALP (62 aa)) is a DNA-binding region (homeobox). Residues 195–283 (LPQHMKPAQQ…SKPLDVSGHP (89 aa)) are disordered. Basic and acidic residues predominate over residues 237-246 (QWSEEREEKG).

It localises to the nucleus. The sequence is that of Anomalous homeobox protein (ANHX) from Homo sapiens (Human).